The primary structure comprises 200 residues: MSKFLQQKPIILASSSTIRHKLMKSLGLDFLVVPSNCNEEEIKTRHNSDELVELGITLAKIKALDVSQHYPEHYIIAADQLCVADKRVFNKPLNHQTAVSHLRELSGKEHQQIACLCIVKESKILWQYHETATLTLHHLSEKTIEAYLQAEKPYQSCGAYQYEGLGKWLFKEVQGSEDTILGLPLMPLVNALVNLKVVGI.

D79 functions as the Proton acceptor in the catalytic mechanism.

It belongs to the Maf family. The cofactor is a divalent metal cation.

The protein resides in the cytoplasm. The enzyme catalyses a ribonucleoside 5'-triphosphate + H2O = a ribonucleoside 5'-phosphate + diphosphate + H(+). The catalysed reaction is a 2'-deoxyribonucleoside 5'-triphosphate + H2O = a 2'-deoxyribonucleoside 5'-phosphate + diphosphate + H(+). Nucleoside triphosphate pyrophosphatase. May have a dual role in cell division arrest and in preventing the incorporation of modified nucleotides into cellular nucleic acids. This Legionella pneumophila (strain Paris) protein is Nucleoside triphosphate pyrophosphatase.